We begin with the raw amino-acid sequence, 70 residues long: Translation initiation factor IF-1 (70 aa).

In terms of domain architecture, S1-like spans 1-70 (MKNDKLFLTG…LKLGRITQRK (70 aa)).

It belongs to the IF-1 family. As to quaternary structure, component of the 30S ribosomal translation pre-initiation complex which assembles on the 30S ribosome in the order IF-2 and IF-3, IF-1 and N-formylmethionyl-tRNA(fMet); mRNA recruitment can occur at any time during PIC assembly.

The protein localises to the cytoplasm. In terms of biological role, one of the essential components for the initiation of protein synthesis. Stabilizes the binding of IF-2 and IF-3 on the 30S subunit to which N-formylmethionyl-tRNA(fMet) subsequently binds. Helps modulate mRNA selection, yielding the 30S pre-initiation complex (PIC). Upon addition of the 50S ribosomal subunit IF-1, IF-2 and IF-3 are released leaving the mature 70S translation initiation complex. This is Translation initiation factor IF-1 from Mycoplasma genitalium (strain ATCC 33530 / DSM 19775 / NCTC 10195 / G37) (Mycoplasmoides genitalium).